The sequence spans 149 residues: Leghemoglobin (149 aa).

The 145-residue stretch at 3-147 (AFSEKQESLV…LAAAIKKAMG (145 aa)) folds into the Globin domain. Y31 carries the nitrated tyrosine modification. S46 is a heme b binding site. S46 carries the post-translational modification Phosphoserine. H62 contacts O2. Heme b is bound by residues K65, H94, and K97. Residue Y135 is modified to Nitrated tyrosine.

It belongs to the plant globin family. In terms of assembly, monomer. In terms of processing, nitrated in effective nodules and particularly in hypoxic conditions; this mechanism may play a protective role in the symbiosis by buffering toxic peroxynitrite NO(2)(-). Nitration level decrease during nodule senescence. Phosphorylation at Ser-46 disrupts the molecular environment of its porphyrin ring oxygen binding pocket, thus leading to a reduced oxygen consumption and to the delivery of oxygen O(2) to symbiosomes. As to expression, root nodules.

It is found in the cytoplasm. The protein localises to the cytosol. It localises to the nucleus. Its function is as follows. Leghemoglobin that reversibly binds oxygen O(2) through a pentacoordinated heme iron. In root nodules, facilitates the diffusion of oxygen to the bacteroids while preventing the bacterial nitrogenase from being inactivated by buffering dioxygen, nitric oxide and carbon monoxide, and promoting the formation of reactive oxygen species (ROS, e.g. H(2)O(2)). This role is essential for symbiotic nitrogen fixation (SNF). The protein is Leghemoglobin of Canavalia lineata (Beach bean).